Reading from the N-terminus, the 679-residue chain is Glycine--tRNA ligase beta subunit (679 aa).

This sequence belongs to the class-II aminoacyl-tRNA synthetase family. As to quaternary structure, tetramer of two alpha and two beta subunits.

Its subcellular location is the cytoplasm. The catalysed reaction is tRNA(Gly) + glycine + ATP = glycyl-tRNA(Gly) + AMP + diphosphate. This is Glycine--tRNA ligase beta subunit from Streptococcus agalactiae serotype III (strain NEM316).